The chain runs to 111 residues: UPF0339 protein BP0521 (111 aa).

2 consecutive repeat copies span residues Ala9–Arg57 and Ala60–Gln108. The segment at Thr86–Ala111 is disordered.

The protein belongs to the UPF0339 family. Duplicated subfamily.

The protein is UPF0339 protein BP0521 of Bordetella pertussis (strain Tohama I / ATCC BAA-589 / NCTC 13251).